Reading from the N-terminus, the 218-residue chain is uncharacterized protein (218 aa).

Composition is skewed to polar residues over residues 1 to 21 and 68 to 102; these read MSSQ…SSEF and LNTS…SSDI. Disordered regions lie at residues 1–39, 63–116, and 170–205; these read MSSQ…RHAS, EKRL…STSG, and GAKR…GTPQ. A compositionally biased stretch (basic and acidic residues) spans 183-195; sequence KRQEKQSPLESRH.

This is an uncharacterized protein from Caenorhabditis elegans.